The following is a 453-amino-acid chain: Phosphoglucosamine mutase (453 aa).

The Phosphoserine intermediate role is filled by Ser-109. Residues Ser-109, Asp-246, Asp-248, and Asp-250 each coordinate Mg(2+). Ser-109 is subject to Phosphoserine.

The protein belongs to the phosphohexose mutase family. It depends on Mg(2+) as a cofactor. Activated by phosphorylation.

The enzyme catalyses alpha-D-glucosamine 1-phosphate = D-glucosamine 6-phosphate. Its function is as follows. Catalyzes the conversion of glucosamine-6-phosphate to glucosamine-1-phosphate. This chain is Phosphoglucosamine mutase, found in Leifsonia xyli subsp. xyli (strain CTCB07).